The chain runs to 229 residues: Juvenile hormone-binding protein (229 aa).

The first 3 residues, 1-3, serve as a signal peptide directing secretion; sequence VLS.

The protein resides in the secreted. In terms of biological role, prevents juvenile hormone from being hydrolyzed by general esterases by combining with it specifically. This is Juvenile hormone-binding protein (JHBP) from Manduca sexta (Tobacco hawkmoth).